Reading from the N-terminus, the 257-residue chain is uncharacterized protein (257 aa).

A helical transmembrane segment spans residues 7-27 (LFLCVSFLLITIFIGGGGFMN).

The protein belongs to the staphylococcal tandem lipoprotein family.

It is found in the cell membrane. This is an uncharacterized protein from Staphylococcus epidermidis (strain ATCC 12228 / FDA PCI 1200).